Consider the following 189-residue polypeptide: UPF0251 protein MTH_1178 (189 aa).

Belongs to the UPF0251 family.

The polypeptide is UPF0251 protein MTH_1178 (Methanothermobacter thermautotrophicus (strain ATCC 29096 / DSM 1053 / JCM 10044 / NBRC 100330 / Delta H) (Methanobacterium thermoautotrophicum)).